The chain runs to 227 residues: Cytochrome c oxidase subunit 2 (227 aa).

Topologically, residues 1-14 (MAYPFELGFQDATS) are mitochondrial intermembrane. A helical transmembrane segment spans residues 15 to 45 (PIMEELLHFHDHTLMIVFLISSLVLYIISLM). Residues 46–59 (LTTKLTHTSTMDAQ) lie on the Mitochondrial matrix side of the membrane. A helical transmembrane segment spans residues 60 to 87 (EVETIWTILPAIILILIALPSLRILYMM). Residues 88-227 (DEINDPSLTV…HFENWSSSML (140 aa)) are Mitochondrial intermembrane-facing. Histidine 161, cysteine 196, glutamate 198, cysteine 200, histidine 204, and methionine 207 together coordinate Cu cation. A Mg(2+)-binding site is contributed by glutamate 198.

Belongs to the cytochrome c oxidase subunit 2 family. Component of the cytochrome c oxidase (complex IV, CIV), a multisubunit enzyme composed of 14 subunits. The complex is composed of a catalytic core of 3 subunits MT-CO1, MT-CO2 and MT-CO3, encoded in the mitochondrial DNA, and 11 supernumerary subunits COX4I, COX5A, COX5B, COX6A, COX6B, COX6C, COX7A, COX7B, COX7C, COX8 and NDUFA4, which are encoded in the nuclear genome. The complex exists as a monomer or a dimer and forms supercomplexes (SCs) in the inner mitochondrial membrane with NADH-ubiquinone oxidoreductase (complex I, CI) and ubiquinol-cytochrome c oxidoreductase (cytochrome b-c1 complex, complex III, CIII), resulting in different assemblies (supercomplex SCI(1)III(2)IV(1) and megacomplex MCI(2)III(2)IV(2)). Found in a complex with TMEM177, COA6, COX18, COX20, SCO1 and SCO2. Interacts with TMEM177 in a COX20-dependent manner. Interacts with COX20. Interacts with COX16. It depends on Cu cation as a cofactor.

Its subcellular location is the mitochondrion inner membrane. The catalysed reaction is 4 Fe(II)-[cytochrome c] + O2 + 8 H(+)(in) = 4 Fe(III)-[cytochrome c] + 2 H2O + 4 H(+)(out). Functionally, component of the cytochrome c oxidase, the last enzyme in the mitochondrial electron transport chain which drives oxidative phosphorylation. The respiratory chain contains 3 multisubunit complexes succinate dehydrogenase (complex II, CII), ubiquinol-cytochrome c oxidoreductase (cytochrome b-c1 complex, complex III, CIII) and cytochrome c oxidase (complex IV, CIV), that cooperate to transfer electrons derived from NADH and succinate to molecular oxygen, creating an electrochemical gradient over the inner membrane that drives transmembrane transport and the ATP synthase. Cytochrome c oxidase is the component of the respiratory chain that catalyzes the reduction of oxygen to water. Electrons originating from reduced cytochrome c in the intermembrane space (IMS) are transferred via the dinuclear copper A center (CU(A)) of subunit 2 and heme A of subunit 1 to the active site in subunit 1, a binuclear center (BNC) formed by heme A3 and copper B (CU(B)). The BNC reduces molecular oxygen to 2 water molecules using 4 electrons from cytochrome c in the IMS and 4 protons from the mitochondrial matrix. The polypeptide is Cytochrome c oxidase subunit 2 (MT-CO2) (Tamias merriami (Merriam's chipmunk)).